A 43-amino-acid chain; its full sequence is CLAVATA3/ESR (CLE)-related protein 16D10 (43 aa).

Residues 1 to 30 (MFTNSIKNLIIYLMPLMVTLMLLSVSFVDA) form the signal peptide. The short motif at 31–43 (GKKPSGPNPGGNN) is the CLE element.

This sequence belongs to the CLV3/ESR signal peptide family. In terms of tissue distribution, highly expressed exclusively within the subventral esophageal gland cell during syncytium formation in host plants.

It localises to the secreted. Its subcellular location is the host cytoplasm. It is found in the host extracellular space. Plays a role in the differentiation or division of feeding cells (syncytia) induced in plant roots during infection. Promotes host root growth. In Meloidogyne arenaria (Peanut root-knot nematode), this protein is CLAVATA3/ESR (CLE)-related protein 16D10 (16D10).